The chain runs to 319 residues: Thioredoxin reductase (319 aa).

An FAD-binding site is contributed by 37–44; it reads ERGVPGGQ. Cys136 and Cys139 are oxidised to a cystine. Residue 279–288 participates in FAD binding; sequence DVRAKSLRQI.

This sequence belongs to the class-II pyridine nucleotide-disulfide oxidoreductase family. In terms of assembly, homodimer. It depends on FAD as a cofactor.

It localises to the cytoplasm. The enzyme catalyses [thioredoxin]-dithiol + NADP(+) = [thioredoxin]-disulfide + NADPH + H(+). This is Thioredoxin reductase (trxB) from Listeria innocua serovar 6a (strain ATCC BAA-680 / CLIP 11262).